We begin with the raw amino-acid sequence, 118 residues long: Ribosome-binding factor A (118 aa).

It belongs to the RbfA family. As to quaternary structure, monomer. Binds 30S ribosomal subunits, but not 50S ribosomal subunits or 70S ribosomes.

The protein localises to the cytoplasm. Its function is as follows. One of several proteins that assist in the late maturation steps of the functional core of the 30S ribosomal subunit. Associates with free 30S ribosomal subunits (but not with 30S subunits that are part of 70S ribosomes or polysomes). Required for efficient processing of 16S rRNA. May interact with the 5'-terminal helix region of 16S rRNA. This chain is Ribosome-binding factor A, found in Shouchella clausii (strain KSM-K16) (Alkalihalobacillus clausii).